The chain runs to 177 residues: Nuclear export protein (177 aa).

2 consecutive short sequence motifs (nuclear export signal) follow at residues 91-100 (LWLPMKSLSL) and 117-127 (MKHQILTRLKL).

As to quaternary structure, binds M1 protein. May interact with human nucleoporins and exportin XPO1/CRM1.

The protein resides in the virion. It is found in the host nucleus. Functionally, mediates the nuclear export of encapsidated genomic RNAs (ribonucleoproteins, RNPs). Acts as an adapter between viral RNPs complexes and the nuclear export machinery of the cell. Possesses no intrinsic RNA-binding activity, but includes a C-terminal M1-binding domain. This domain is believed to allow recognition of RNPs to which the M1 protein is bound. Because the M1 protein is not available in large quantities until the later stages of infection, such an indirect recognition mechanism probably ensures that genomic RNPs are not exported from the nucleus before sufficient quantities of viral mRNA and progeny genomic RNA have been synthesized. Furthermore, the RNPs enters the cytoplasm only when they have associated with the M1 protein that is necessary to guide them to the plasma membrane. May down-regulate viral RNA synthesis when overproduced. This Homo sapiens (Human) protein is Nuclear export protein (NS).